Here is a 261-residue protein sequence, read N- to C-terminus: Chanoclavine-I dehydrogenase ifgE (261 aa).

The signal sequence occupies residues 1-20 (MASVKSRVFAITGGASGIGA). 7 residues coordinate NADP(+): isoleucine 18, lysine 48, aspartate 66, arginine 132, tyrosine 166, lysine 170, and threonine 201. Residue tyrosine 166 is the Proton acceptor of the active site. Lysine 170 (lowers pKa of active site Tyr) is an active-site residue.

This sequence belongs to the short-chain dehydrogenases/reductases (SDR) family.

It participates in alkaloid biosynthesis; ergot alkaloid biosynthesis. In terms of biological role, chanoclavine-I dehydrogenase; part of the gene cluster that mediates the biosynthesis of isofumigaclavines, fungal ergot alkaloids. The tryptophan dimethylallyltransferase ifgA catalyzes the first step of ergot alkaloid biosynthesis by condensing dimethylallyl diphosphate (DMAP) and tryptophan to form 4-dimethylallyl-L-tryptophan. The second step is catalyzed by the methyltransferase ifgB that methylates 4-dimethylallyl-L-tryptophan in the presence of S-adenosyl-L-methionine, resulting in the formation of N-methyl-dimethylallyl-L-tryptophan. The catalase ifgD and the FAD-dependent oxidoreductase ifgC then transform N-methyl-dimethylallyl-L-tryptophan to chanoclavine-I which is further oxidized by ifgE in the presence of NAD(+), resulting in the formation of chanoclavine-I aldehyde. The chanoclavine-I aldehyde reductases ifgG and/or fgaOx3 reduce chanoclavine-I aldehyde to dihydrochanoclavine-I aldehyde that spontaneously dehydrates to form 6,8-dimethyl-6,7-didehydroergoline. The festuclavine dehydrogenases ifgF1 and/or ifgF2 then catalyze the reduction of 6,8-dimethyl-6,7-didehydroergoline to form festuclavine. Hydrolysis of festuclavine by a yet undetermined cytochrome P450 monooxygenase (called ifgH) then leads to the formation of isofumigaclavine B which is in turn acetylated by ifgI to isofumigaclavine A. Penicillium roqueforti has interestingly at least two sets of genes for the consumption of chanoclavine-I aldehyde on three different loci, the OYEs ifgG/fgaOx3 and the festuclavine synthase homologs ifgF1/ifgF2. The reason for the duplication of these genes is unclear, probably to ensure the conversion of chanoclavine-I aldehyde by differential gene expression under various environmental conditions. The polypeptide is Chanoclavine-I dehydrogenase ifgE (Penicillium roqueforti (strain FM164)).